A 1404-amino-acid polypeptide reads, in one-letter code: MKSLLDLFKQFTPDEHFDAIKIGMASPEKIRSWSFGEVKKPETINYRTFKPERDGLFCAKIFGPIKDYECLCGKYKRLKHRGVICEKCGVEVTQTKVRRERMGHIDLAAPCAHIWFLKSLPSRLGLVLDMTLRDIERVLYFEAYVVTDPGMTPLKKFSIMSEDDFDAKRKEYGDEYTAKMGAEGIKDLLEGLDLDIEIDKLRNDLTGSEIKIKKNAKRLKLMEGFKKSGIKPEWMVLDVLPVLPPDLRPLVPLDGGRFATSDLNDLYRRVINRNSRLRRLLELKAPEIIARNEKRMLQEAVDSLLDNGRRGKAMTGANKRALKSLADMIKGKSGRFRQNLLGKRVDYSGRSVITVGPTLKLHQCGLPKLMALELFKPFIFAQLEVRGIATTIKAAKKEVETGTPVVWDILEEVIKEHPVMLNRAPTLHRLGIQAFEPILIEGKAIQLHPLVCSAFNADFDGDQMAVHVPLSVEAQMEARTLMLASNNILFPANGEPSIVPSQDVVLGLYYTTRDRTNGKGEGLVFSDTGEVRRAFDAGELDLNARISVRLTEWSKDKETNEFVPSTKLWETTGGRALLSEILPKGLPFSNINKALKKKEISKLINVSFRKCGLKETVVFADKLLQSGFRLATKAGISICIEDMLVPKEKTSIIAHAQKEVKEIEQQYTSGLVTAGERYNKVVDIWGKSGDEVSKAMMAQLSKEKVIDRHGNLVEQDSFNSIYMMADSGARGSAAQIRQVAGMRGLMAKPDGSIIETPITANFREGLNVLEYFISTHGARKGLADTALKTANSGYLTRRLCDVVQDLVVTEDDCGTLDGSVMRAIVEGGEVIESLRDRVLGRTIVEDVLHPENRSVLIKAGVMLDEDLIEELEAAGVDEVKVRTALTCETRFGLCAKCYGRDLGRGGLINIGEAVGIIAAQSIGEPGTQLTMRTFHIGGAASRAAIASSVEAKSNGVIGFNAPMRYVTNGKGDLVVIARSGEIIIHDEHGRERERHKVPYGATLTVKIDQTIKAGAILANWDPLTRPIITEFAGKVQFENVEEGVTVAKQVDDVTGLSTLVVIDPKRRGATKVIRPQVKLIDATGNEVKIPGTDHSVTIGFQIGALVQVRDGQDVGPGEVLARIPIEGQKTRDITGGLPRVAELFEARTPKDKGTLAEMTGTVSFGKETKGKVRLQITDPEGKVWEDLVPKEKNILVHEGQVVNKGESIVDGPADPQDILRLLGVAELARYIVDEVQDVYRLQGVKINDKHIEVIVRQMLRRVVVENVGDTSYIAGEQVERSALLDVNDALRADGKIPATFSNLLLGITKASLSTDSFISAASFQETTRVLTEAAIMGKRDELRGLKENVIVGRLIPAGTGMAYHEARKAKDLMDDSERRAIAESEAAELEASQAETSDENAAAE.

Residues C70, C72, C85, and C88 each contribute to the Zn(2+) site. Residues D458, D460, and D462 each coordinate Mg(2+). C813, C887, C894, and C897 together coordinate Zn(2+). Residues 1377-1404 (ERRAIAESEAAELEASQAETSDENAAAE) are disordered.

It belongs to the RNA polymerase beta' chain family. The RNAP catalytic core consists of 2 alpha, 1 beta, 1 beta' and 1 omega subunit. When a sigma factor is associated with the core the holoenzyme is formed, which can initiate transcription. Requires Mg(2+) as cofactor. It depends on Zn(2+) as a cofactor.

It catalyses the reaction RNA(n) + a ribonucleoside 5'-triphosphate = RNA(n+1) + diphosphate. Its function is as follows. DNA-dependent RNA polymerase catalyzes the transcription of DNA into RNA using the four ribonucleoside triphosphates as substrates. The polypeptide is DNA-directed RNA polymerase subunit beta' (Polaromonas naphthalenivorans (strain CJ2)).